A 557-amino-acid polypeptide reads, in one-letter code: High-affinity hexose transporter ght4 (557 aa).

Residues 1-9 (MGRTLTSVL) are Cytoplasmic-facing. The chain crosses the membrane as a helical span at residues 10-30 (VVFISMAGWLGGADTGSISGI). The Extracellular segment spans residues 31–58 (LGMRDFQSRFADRYNPITNSYSYSAWRQ). The helical transmembrane segment at 59 to 79 (ALLTGTVNAGCLFGAMLSSPF) threads the bilayer. At 80-87 (TEAIGKKY) the chain is on the cytoplasmic side. The chain crosses the membrane as a helical span at residues 88–108 (SIAFFSGCYIIGQILLVTAVP). The Extracellular segment spans residues 109–112 (SWVQ). Residues 113-133 (IMVGKLFTGLTIGALSVLSPG) form a helical membrane-spanning segment. The Cytoplasmic portion of the chain corresponds to 134–144 (YQSEVAPPQIR). The chain crosses the membrane as a helical span at residues 145-165 (GAVVSTYQLFQTCGTLIAACI). Residues 166–179 (NMGTHKLRKTASWR) are Extracellular-facing. Residues 180–200 (TSFGINILWGIFLMVGVLFLP) form a helical membrane-spanning segment. Over 201 to 266 (ESPRYLIYKG…VFGKEVRYRT (66 aa)) the chain is Cytoplasmic. A helical transmembrane segment spans residues 267–285 (VLGFLTMLLRELIGNNYYF). The Extracellular segment spans residues 286–301 (YYATQVFKGTGMTDIF). A helical membrane pass occupies residues 302-322 (LPAVILGAINFGTTFGALYTI). Residues 323–328 (DNLGRR) lie on the Cytoplasmic side of the membrane. Residues 329-349 (NPLIFGAAFQSICFFIYAAVG) traverse the membrane as a helical segment. The Extracellular segment spans residues 350 to 363 (DRKLIYKNGTSDHR). N-linked (GlcNAc...) asparagine glycosylation is present at N357. Residues 364–384 (AGAVMIVFSCLFLFSYCCSWG) traverse the membrane as a helical segment. The Cytoplasmic segment spans residues 385 to 404 (PMGWVIVGETFPIRYRSKCA). The chain crosses the membrane as a helical span at residues 405–425 (AVATSGNWLGNFMVSFFTPFI). The Extracellular segment spans residues 426-432 (SNSIGFK). A helical transmembrane segment spans residues 433–453 (LGYIYACINMTSAFQIFLMAK). At 454-557 (ETKGLTLEEV…VSEESHPTWV (104 aa)) the chain is on the cytoplasmic side. The segment covering 492 to 514 (KEEEKREREKSKGYRGQEERFIE) has biased composition (basic and acidic residues). The tract at residues 492–557 (KEEEKREREK…VSEESHPTWV (66 aa)) is disordered. A compositionally biased stretch (low complexity) spans 524–536 (SSASSESFASAGA). A compositionally biased stretch (basic and acidic residues) spans 547–557 (NVSEESHPTWV).

The protein belongs to the major facilitator superfamily. Sugar transporter (TC 2.A.1.1) family.

The protein resides in the membrane. This is High-affinity hexose transporter ght4 (ght4) from Schizosaccharomyces pombe (strain 972 / ATCC 24843) (Fission yeast).